A 517-amino-acid chain; its full sequence is 2,3-bisphosphoglycerate-independent phosphoglycerate mutase (517 aa).

Mn(2+)-binding residues include aspartate 14 and serine 64. Serine 64 (phosphoserine intermediate) is an active-site residue. Residues histidine 125, 155–156 (RD), arginine 187, arginine 193, 263–266 (RSDR), and lysine 337 each bind substrate. Mn(2+) contacts are provided by aspartate 404, histidine 408, aspartate 445, histidine 446, and histidine 464.

This sequence belongs to the BPG-independent phosphoglycerate mutase family. In terms of assembly, monomer. Requires Mn(2+) as cofactor.

It carries out the reaction (2R)-2-phosphoglycerate = (2R)-3-phosphoglycerate. It functions in the pathway carbohydrate degradation; glycolysis; pyruvate from D-glyceraldehyde 3-phosphate: step 3/5. In terms of biological role, catalyzes the interconversion of 2-phosphoglycerate and 3-phosphoglycerate. The polypeptide is 2,3-bisphosphoglycerate-independent phosphoglycerate mutase (Nitrosococcus oceani (strain ATCC 19707 / BCRC 17464 / JCM 30415 / NCIMB 11848 / C-107)).